We begin with the raw amino-acid sequence, 342 residues long: Holliday junction branch migration complex subunit RuvB (342 aa).

The tract at residues 4 to 182 is large ATPase domain (RuvB-L); the sequence is TDRLLSAGRR…FGIPIRLQFY (179 aa). ATP-binding residues include L21, R22, G63, K66, T67, T68, R172, Y182, and R219. T67 lines the Mg(2+) pocket. Residues 183-253 are small ATPAse domain (RuvB-S); it reads TVEELERVVS…VADQSLNRLE (71 aa). The head domain (RuvB-H) stretch occupies residues 256–342; the sequence is NLGLDAMDRR…EAGQDGLFDV (87 aa). DNA is bound by residues R292, R311, and R316.

This sequence belongs to the RuvB family. In terms of assembly, homohexamer. Forms an RuvA(8)-RuvB(12)-Holliday junction (HJ) complex. HJ DNA is sandwiched between 2 RuvA tetramers; dsDNA enters through RuvA and exits via RuvB. An RuvB hexamer assembles on each DNA strand where it exits the tetramer. Each RuvB hexamer is contacted by two RuvA subunits (via domain III) on 2 adjacent RuvB subunits; this complex drives branch migration. In the full resolvosome a probable DNA-RuvA(4)-RuvB(12)-RuvC(2) complex forms which resolves the HJ.

The protein localises to the cytoplasm. It catalyses the reaction ATP + H2O = ADP + phosphate + H(+). The RuvA-RuvB-RuvC complex processes Holliday junction (HJ) DNA during genetic recombination and DNA repair, while the RuvA-RuvB complex plays an important role in the rescue of blocked DNA replication forks via replication fork reversal (RFR). RuvA specifically binds to HJ cruciform DNA, conferring on it an open structure. The RuvB hexamer acts as an ATP-dependent pump, pulling dsDNA into and through the RuvAB complex. RuvB forms 2 homohexamers on either side of HJ DNA bound by 1 or 2 RuvA tetramers; 4 subunits per hexamer contact DNA at a time. Coordinated motions by a converter formed by DNA-disengaged RuvB subunits stimulates ATP hydrolysis and nucleotide exchange. Immobilization of the converter enables RuvB to convert the ATP-contained energy into a lever motion, pulling 2 nucleotides of DNA out of the RuvA tetramer per ATP hydrolyzed, thus driving DNA branch migration. The RuvB motors rotate together with the DNA substrate, which together with the progressing nucleotide cycle form the mechanistic basis for DNA recombination by continuous HJ branch migration. Branch migration allows RuvC to scan DNA until it finds its consensus sequence, where it cleaves and resolves cruciform DNA. The sequence is that of Holliday junction branch migration complex subunit RuvB from Rhizorhabdus wittichii (strain DSM 6014 / CCUG 31198 / JCM 15750 / NBRC 105917 / EY 4224 / RW1) (Sphingomonas wittichii).